Consider the following 235-residue polypeptide: Glycerol-3-phosphate acyltransferase (235 aa).

Transmembrane regions (helical) follow at residues 2 to 22, 56 to 76, 94 to 114, 126 to 146, 152 to 172, and 190 to 210; these read FTLIVILAVSYLIGSIPTSII, TVTILDIVKGAIAAISVVVFF, LIAGLSAVFGHVFTVFAGFKG, FGIAPVTTLIVLGVFLLVVFL, VASILAAIAFPVIIAVRKYLF, and FIHDSLDYHLLIFGFIVAAAI.

The protein belongs to the PlsY family. In terms of assembly, probably interacts with PlsX.

The protein resides in the cell inner membrane. The enzyme catalyses an acyl phosphate + sn-glycerol 3-phosphate = a 1-acyl-sn-glycero-3-phosphate + phosphate. The protein operates within lipid metabolism; phospholipid metabolism. Functionally, catalyzes the transfer of an acyl group from acyl-phosphate (acyl-PO(4)) to glycerol-3-phosphate (G3P) to form lysophosphatidic acid (LPA). This enzyme utilizes acyl-phosphate as fatty acyl donor, but not acyl-CoA or acyl-ACP. The polypeptide is Glycerol-3-phosphate acyltransferase (Chlorobium phaeobacteroides (strain BS1)).